A 231-amino-acid polypeptide reads, in one-letter code: Phosphatidate cytidylyltransferase (231 aa).

6 helical membrane-spanning segments follow: residues 33-53, 67-87, 95-115, 133-153, 167-187, and 206-226; these read FVVA…LVAI, IMYL…LIFL, WLIM…MIGG, WSGL…ISFI, IYLF…DLFI, and HGGV…LFFI.

This sequence belongs to the CDS family.

The protein resides in the cell membrane. It carries out the reaction a 1,2-diacyl-sn-glycero-3-phosphate + CTP + H(+) = a CDP-1,2-diacyl-sn-glycerol + diphosphate. Its pathway is phospholipid metabolism; CDP-diacylglycerol biosynthesis; CDP-diacylglycerol from sn-glycerol 3-phosphate: step 3/3. The sequence is that of Phosphatidate cytidylyltransferase (cdsA) from Rickettsia bellii (strain RML369-C).